Consider the following 27-residue polypeptide: Conotoxin Bt9.2 (27 aa).

3 cysteine pairs are disulfide-bonded: Cys-2–Cys-16, Cys-6–Cys-19, and Cys-12–Cys-24. A 4-hydroxyproline modification is found at Pro-13.

As to expression, expressed by the venom duct.

Its subcellular location is the secreted. Functionally, probable neurotoxin that inhibits ion channels. This is Conotoxin Bt9.2 from Conus betulinus (Beech cone).